The sequence spans 1342 residues: DNA-directed RNA polymerase subunit beta (1342 aa).

It belongs to the RNA polymerase beta chain family. The RNAP catalytic core consists of 2 alpha, 1 beta, 1 beta' and 1 omega subunit. When a sigma factor is associated with the core the holoenzyme is formed, which can initiate transcription.

It carries out the reaction RNA(n) + a ribonucleoside 5'-triphosphate = RNA(n+1) + diphosphate. In terms of biological role, DNA-dependent RNA polymerase catalyzes the transcription of DNA into RNA using the four ribonucleoside triphosphates as substrates. This is DNA-directed RNA polymerase subunit beta from Mannheimia succiniciproducens (strain KCTC 0769BP / MBEL55E).